We begin with the raw amino-acid sequence, 143 residues long: uncharacterized protein (143 aa).

Helical transmembrane passes span 20–39 (FKYC…WITV) and 113–135 (YFSL…ITGL).

The protein localises to the membrane. This is an uncharacterized protein from Saccharomyces cerevisiae (strain ATCC 204508 / S288c) (Baker's yeast).